Consider the following 242-residue polypeptide: MSAQAAAATAAALQFKGRMITVTLLRLLSPSLEAVGRELDARLADGSGLLAGLPTVLDLEALGESAAGLELAALAATLRAHGVSLIGLRELPGEAGEALRTRAEAAGLAVLNVDGSRAAPRREVEVSPRPAAEPVRSLLVTQPVRSGQQVYARGGDLILTAPVSAGAEVMADGNIHVYAPLRGRAMAGVLGDSGARIFCQRLDCELVAVAGHYRLSEQISDAERAGPVQVRLEGESLVIEAL.

The protein belongs to the MinC family. As to quaternary structure, interacts with MinD and FtsZ.

Its function is as follows. Cell division inhibitor that blocks the formation of polar Z ring septums. Rapidly oscillates between the poles of the cell to destabilize FtsZ filaments that have formed before they mature into polar Z rings. Prevents FtsZ polymerization. In Thioalkalivibrio sulfidiphilus (strain HL-EbGR7), this protein is Probable septum site-determining protein MinC.